A 587-amino-acid polypeptide reads, in one-letter code: MNDSLFVSLDRLLLEFVFQYEQDISTKEEMIQRINKCCEDIKENKVTICRIHETINATDEEIDHYCKHSEEIKDNCRNWKPTCDVFRKHEDYMQDQFTVYQGTVEKDKEMYHDYICQYKEVLKQYQLKYSETPFSREYYEKKREHEEIQSRVLACTEQLKMNETIFMKFRVPAPFPSLTKWTLNIVNLRCETQDILKHASNLTKSSSELKKEVDEMEIEINYLNQQISRHNETKALSETLEEKNKNTENRKELKERIFGKDEHVLTLNKTQSSQLFLPYESQKLVRPIKMHSSEPRVADIKEESSAKQSKLANIDFRQKENDTQIFNDSAVDNHSKCSHITTITSSQKFMQVRLLTPQKQSNSNQWSEKGDKDAEYGDKGTVRQVRESKCTSQAIYTEHFGKSVENDSDEVEERAENFPRTSEIPIFLGTPKAVKAPESLEKIKFPKTPPFEINRNRNAVPEVQTEKESPGLSFLMSYTSRSPGLNLFDSSVFDTEISSDQFNEHYSARNLNPLSSEQEIGNLLEKPEGEDGFTFSFPSDTSTHTFGAGKDDFSFPFSFGQGQNSIPSSSLKGFSSSSQNTTQFTFF.

The segment at T356 to D378 is disordered. Polar residues predominate over residues P357 to S367. Positions E368 to D378 are enriched in basic and acidic residues. At S439 the chain carries Phosphoserine. The tract at residues S568 to F587 is disordered.

As to quaternary structure, interacts with SYCE1. Interacts with proteasome subunit PSMA8; to participate in meiosis progression during spermatogenesis. In terms of tissue distribution, highest expression in retina, skeletal muscle, testis and colon.

Its subcellular location is the chromosome. Its function is as follows. Meiotic protein that localizes to the central element of the synaptonemal complex and is required for chromosome synapsis during meiotic recombination. Required for the appropriate processing of intermediate recombination nodules before crossover formation. The sequence is that of Protein SIX6OS1 from Homo sapiens (Human).